A 244-amino-acid chain; its full sequence is Ras-like protein family member 11B (244 aa).

The tract at residues 19–242 is small GTPase-like; the sequence is PSSRVIKIAV…VLSAKVRTVT (224 aa). GTP is bound by residues 30–37, 77–81, and 142–145; these read GGSGVGKT, DTPGV, and NKAD. Residues 200–222 form a disordered region; that stretch reads INATSSVTEKKRSPLIPRPKSPN.

This sequence belongs to the small GTPase superfamily. Ras family.

The catalysed reaction is GTP + H2O = GDP + phosphate + H(+). This is Ras-like protein family member 11B from Danio rerio (Zebrafish).